The primary structure comprises 451 residues: MSFKPVVALVGRPNVGKSTLFNRLTRSRAALVADYSGLTRDRHYGEGRVGDTPFIVIDTGGFEPVAKTGILREMARQTRQAIAEADVVVFLVDARAGVNAHDHEIAQLLRKSGQQRVVLAVNKAEGMGVGNATSEFHELGLGTPYPISAAHGDGIVDLIGLALQDLVEPEPEPAPDAADLPPDHRIKLAIVGRPNVGKSTLINTLLGEERVIAFDLPGTTRDAIEIDFERDGRKYTLIDTAGLRRRGKVFEAVEKFSVIKTLQAIEASNVVLLMLDAQTEVSEQDAHIAGFVLETGRAVVVAINKWDGLDIDQRERIEREFRRKLRFLSFAPTHTISALKGQGIKPVLKSVVAAHAAAFAKLSTPKLTRELHAAVEQQPPPRKGIFRPKMRYAHQGGQNPPLVIIHGNALDAIPDSYRRYLETRFREAFKLDGTPLRIEFKSSRNPYTQES.

EngA-type G domains follow at residues 5–170 (PVVA…VEPE) and 186–359 (IKLA…AAAF). Residues 11 to 18 (GRPNVGKS), 58 to 62 (DTGGF), 122 to 125 (NKAE), 192 to 199 (GRPNVGKS), 239 to 243 (DTAGL), and 304 to 307 (NKWD) contribute to the GTP site. The KH-like domain maps to 360–444 (AKLSTPKLTR…PLRIEFKSSR (85 aa)).

This sequence belongs to the TRAFAC class TrmE-Era-EngA-EngB-Septin-like GTPase superfamily. EngA (Der) GTPase family. As to quaternary structure, associates with the 50S ribosomal subunit.

GTPase that plays an essential role in the late steps of ribosome biogenesis. The chain is GTPase Der from Bordetella petrii (strain ATCC BAA-461 / DSM 12804 / CCUG 43448).